Here is a 294-residue protein sequence, read N- to C-terminus: Putative maltodextrin utilization protein YvdJ (294 aa).

4 helical membrane-spanning segments follow: residues 35–55 (LSFLFLFLTACLMAPLAVSFV), 184–204 (MIMMLAYTVVSMIQLLLTFVL), 228–248 (IAICASALPAFAAAAIGMVHF), and 249–269 (DLITVLMIHSCGVTLMISFAF).

The protein resides in the cell membrane. In terms of biological role, could have a role in maltodextrin utilization. This Bacillus subtilis (strain 168) protein is Putative maltodextrin utilization protein YvdJ (yvdJ).